The following is a 239-amino-acid chain: Cysteine-rich venom protein (239 aa).

A signal peptide spans 1 to 19 (MIAFLVLPILAAVLQQSSG). In terms of domain architecture, SCP spans 39-166 (DLHNSLRRSV…EYKYFYVCQY (128 aa)). Cystine bridges form between Cys75–Cys153, Cys92–Cys167, Cys148–Cys164, Cys186–Cys193, Cys189–Cys198, Cys202–Cys234, Cys211–Cys228, and Cys219–Cys232. Residues 202 to 234 (CTHEDKFTNCKDLVKQGCNNNYLKTNCPASCSC) enclose the ShKT domain.

Belongs to the CRISP family. In terms of tissue distribution, expressed by the venom gland.

The protein localises to the secreted. In terms of biological role, blocks contraction of smooth muscle elicited by high potassium-induced depolarization, but does not block caffeine-stimulated contraction. May target voltage-gated calcium channels in smooth muscle. In Vipera berus (Common European adder), this protein is Cysteine-rich venom protein.